A 106-amino-acid polypeptide reads, in one-letter code: Pyrimidine/purine nucleoside phosphorylase (106 aa).

Belongs to the nucleoside phosphorylase PpnP family.

It catalyses the reaction a purine D-ribonucleoside + phosphate = a purine nucleobase + alpha-D-ribose 1-phosphate. The enzyme catalyses adenosine + phosphate = alpha-D-ribose 1-phosphate + adenine. It carries out the reaction cytidine + phosphate = cytosine + alpha-D-ribose 1-phosphate. The catalysed reaction is guanosine + phosphate = alpha-D-ribose 1-phosphate + guanine. It catalyses the reaction inosine + phosphate = alpha-D-ribose 1-phosphate + hypoxanthine. The enzyme catalyses thymidine + phosphate = 2-deoxy-alpha-D-ribose 1-phosphate + thymine. It carries out the reaction uridine + phosphate = alpha-D-ribose 1-phosphate + uracil. The catalysed reaction is xanthosine + phosphate = alpha-D-ribose 1-phosphate + xanthine. Functionally, catalyzes the phosphorolysis of diverse nucleosides, yielding D-ribose 1-phosphate and the respective free bases. Can use uridine, adenosine, guanosine, cytidine, thymidine, inosine and xanthosine as substrates. Also catalyzes the reverse reactions. This chain is Pyrimidine/purine nucleoside phosphorylase, found in Burkholderia vietnamiensis (strain G4 / LMG 22486) (Burkholderia cepacia (strain R1808)).